Reading from the N-terminus, the 487-residue chain is Cysteine--tRNA ligase (487 aa).

Residue Cys27 coordinates Zn(2+). Positions 29-39 (VTVYDLCHIGH) match the 'HIGH' region motif. 3 residues coordinate Zn(2+): Cys211, His236, and Glu240. The short motif at 268–272 (KMSKS) is the 'KMSKS' region element. Position 271 (Lys271) interacts with ATP.

The protein belongs to the class-I aminoacyl-tRNA synthetase family. Monomer. Requires Zn(2+) as cofactor.

It localises to the cytoplasm. It catalyses the reaction tRNA(Cys) + L-cysteine + ATP = L-cysteinyl-tRNA(Cys) + AMP + diphosphate. This is Cysteine--tRNA ligase from Thermodesulfovibrio yellowstonii (strain ATCC 51303 / DSM 11347 / YP87).